The sequence spans 291 residues: Protein ZAR1-like (291 aa).

The interval 103–152 is disordered; that stretch reads GSQTLHSSSLSDRTSSRKPTEAWEVGRRALIRRPQDGEDEESQEELTGPT. The segment covering 106 to 115 has biased composition (low complexity); that stretch reads TLHSSSLSDR. Basic and acidic residues predominate over residues 116-129; that stretch reads TSSRKPTEAWEVGR. Residues 195-280 form a 3CxxC-type zinc finger; the sequence is LKYGYFHCKD…QELCGHCKDK (86 aa).

It belongs to the ZAR1 family. As to quaternary structure, interacts with YBX2. Expressed in oocytes and zygotes. Predominantly expressed in maturing oocytes before maternal-to-zygotic transition (MZT). Less abundant than Zar1.

Its subcellular location is the cytoplasm. The protein localises to the cytoplasmic ribonucleoprotein granule. Functionally, mRNA-binding protein required for maternal mRNA storage, translation and degradation during oocyte maturation. Probably promotes formation of some phase-separated membraneless compartment that stores maternal mRNAs in oocytes: acts by undergoing liquid-liquid phase separation upon binding to maternal mRNAs. Binds to the 3'-UTR of maternal mRNAs, inhibiting their translation. This is Protein ZAR1-like from Mus musculus (Mouse).